We begin with the raw amino-acid sequence, 414 residues long: Sensor protein CutS (414 aa).

The span at 1 to 15 (MATTPAPPGAPPKPT) shows a compositional bias: pro residues. The interval 1–21 (MATTPAPPGAPPKPTWDPRSA) is disordered. The next 2 membrane-spanning stretches (helical) occupy residues 37–57 (LLYG…IYLL) and 121–141 (SLLA…AMAG). Positions 142–194 (RVLSPLGRITRTARAVAGSDLSRRIELDGPDDELKELADTFDDMLERLQRAFT) constitute an HAMP domain. Residues 202–414 (NASHELRTPL…GLVMRVTLPV (213 aa)) enclose the Histidine kinase domain. H205 is subject to Phosphohistidine; by autocatalysis.

It is found in the cell membrane. The catalysed reaction is ATP + protein L-histidine = ADP + protein N-phospho-L-histidine.. In terms of biological role, member of the two-component regulatory system CutS/CutR, involved in the regulation of copper metabolism. In Streptomyces coelicolor (strain ATCC BAA-471 / A3(2) / M145), this protein is Sensor protein CutS (cutS).